We begin with the raw amino-acid sequence, 176 residues long: Woronin body major protein (176 aa).

A propeptide spanning residues 1-16 (MGYYDDDAHGHVEADA) is cleaved from the precursor. Basic and acidic residues predominate over residues 1-16 (MGYYDDDAHGHVEADA). The segment at 1–31 (MGYYDDDAHGHVEADAAPRATTGTGTGSASQ) is disordered. Residues 174–176 (SRL) carry the Microbody targeting signal motif.

Belongs to the eIF-5A family. Hex1 subfamily. In terms of assembly, forms oligomers. Self-assembles into hexagonal rods.

The protein localises to the cell septum. In terms of biological role, major component of Woronin bodies, fungal-specific organelles that occlude septal pores in order to separate intact from damaged compartments. Hex-1 binds directly or indirectly to the Woronin body tether that in turn is anchored at the rim of the septal pore. In Neurospora crassa (strain ATCC 24698 / 74-OR23-1A / CBS 708.71 / DSM 1257 / FGSC 987), this protein is Woronin body major protein.